Reading from the N-terminus, the 5112-residue chain is Malformin synthetase mlfA (5112 aa).

The segment at 225–616 (ERHAANRPHS…CGRADTQVKL (392 aa)) is adenylation 1. Residues 757–830 (SRLEQEIQLA…EAASLAEVQE (74 aa)) enclose the Carrier 1 domain. S791 carries the post-translational modification O-(pantetheine 4'-phosphoryl)serine. The segment at 868-1299 (EDVFPCTTMQ…ALDSLTLLQA (432 aa)) is condensation 1. An adenylation 2 region spans residues 1327-1716 (DRRVTRQPDT…GRKDTQVKLR (390 aa)). The Carrier 2 domain maps to 1854–1931 (TAASELERTL…QLAAELGESP (78 aa)). O-(pantetheine 4'-phosphoryl)serine is present on S1891. Disordered regions lie at residues 1926–1961 (ELGESPRSSTSSASSSTEDEFTISTPDDSSTNDGVD) and 1994–2034 (GGSS…VPEP). Low complexity-rich tracts occupy residues 1930-1941 (SPRSSTSSASSS) and 1994-2012 (GGSSSSKTPSVSSSSSSSS). The condensation 2 stretch occupies residues 2064-2479 (EDIYPATALQ…AVSYSDKQTL (416 aa)). An adenylation 3 region spans residues 2502–2894 (IRTPHAPAVC…IGRRDGQVKL (393 aa)). One can recognise a Carrier 3 domain in the interval 3030–3106 (RPTTAKECEM…QLLFHLRNAK (77 aa)). At S3067 the chain carries O-(pantetheine 4'-phosphoryl)serine. Condensation regions lie at residues 3122-3586 (WVDL…TYEQ) and 3607-4044 (NIYP…EQLV). An adenylation 4 region spans residues 4069 to 4459 (HSSRQAVCAW…VGRKDNQIKF (391 aa)). In terms of domain architecture, Carrier 4 spans 4593-4669 (MPSTEAECIM…DLARHNSLVQ (77 aa)). S4630 is modified (O-(pantetheine 4'-phosphoryl)serine). Residues 4724–5106 (IVVDIPGRIS…VEKVVALLRD (383 aa)) form a condensation 5 region.

This sequence belongs to the NRP synthetase family.

The protein operates within secondary metabolite biosynthesis. Functionally, nonribosomal peptide synthetase; part of the gene cluster that mediates the biosynthesis of malformins, cyclic pentapeptides with a disulfide bond between 2 consecutive cysteins, that show potential anti-tumor as well as antimalarial and antitrypanosomal properties. The nonribosomal peptide synthetase mlfA is responsible of the formation of the cyclic pentapeptide. MlfA probably acts iteratively on one amino acid and possesses multiple amino acid specificities since it is involved in the biosynthesis of multiple malformins, including malformin C and malformin A2. Malformin C corresponds to a cyclo[D-Cys-D-Cys-Val-D-Leu-Val] pentapeptide whereas malformin A2 corresponds to a cyclo[D-Cys-D-Cys-Val-D-Leu-Ile] pentapeptide. The malformin biosynthesis clusters in malformin-producing fungi also contain enzymes involved in the formation of the disulfide bond between the two consecutive cysteins within malformins, in addition to additional tailoring enzymes such as methyltransferases or oxidoreductases. They are also composed of up to 4 major facilitator superfamily transporters, and transcription factors probably involved in the regulation of the expression of those clusters. The polypeptide is Malformin synthetase mlfA (Aspergillus brasiliensis (strain CBS 101740 / IMI 381727 / IBT 21946)).